The sequence spans 241 residues: Penton protein H240R (241 aa).

Belongs to the asfivirus H240R family.

It localises to the virion. Functionally, forms the penton at the fivefold vertices of the icosahedral capsid. Together with the minor capsid proteins (p17, p49, and M1249L), forms a complicated network immediately below the outer capsid shell, stabilizing the whole capsid. This chain is Penton protein H240R, found in African swine fever virus (isolate Tick/Malawi/Lil 20-1/1983) (ASFV).